The sequence spans 503 residues: MDFLTNLRFTEGISEPYIEIFEQPRQRGTRFRYKCEGRSAGSIPGEHSTDNNKTFPSIQILNYFGKVKIRTTLVTKNEPYKPHPHDLVGKGCRDGYYEAEFGPERQVLSFQNLGIQCVKKKDLKESISLRISKKINPFNVPEEQLHNIDEYDLNVVRLCFQAFLPDEHGNYTLALPPLISNPIYDNRAPNTAELRICRVNKNCGSVKGGDEIFLLCDKVQKDDIEVRFVLGNWEAKGSFSQADVHRQVAIVFRTPPFLGDITEPITVKMQLRRPSDQAVSEPVDFRYLPDEEDPSGNKAKRQRSTLAWQKPIQDCGSAVTERPKAAPIPTVNPEGKLKKEPNMFSPTLMLPGLGTLSSSQMYPACSQMPTQPAQLGPGKQDTLHSCWQQLYSPSPSASSLLSLHSHSSFTAEVPQPGAQGSSSLPAYNPLNWPDEKNSSFYRNFGNTHGMGAALVSAAGMQSVSSSSIVQGTHQASATTASIMTMPRTPGEVPFLRQQVGYRS.

The region spanning 16–305 (PYIEIFEQPR…GNKAKRQRST (290 aa)) is the RHD domain. Residue Ser275 is modified to Phosphoserine; by host PKA. Disordered stretches follow at residues 286 to 306 (RYLPDEEDPSGNKAKRQRSTL) and 318 to 342 (AVTERPKAAPIPTVNPEGKLKKEPN). Residues 298–303 (KAKRQR) carry the Nuclear localization signal motif.

It localises to the host cytoplasm. Functionally, this transforming protein appears to have a protein-kinase activity. The sequence is that of Transforming protein rel polyprotein (V-REL) from Galliformes.